Here is a 251-residue protein sequence, read N- to C-terminus: Triosephosphate isomerase (251 aa).

Residue 10-12 coordinates substrate; sequence NWK. His-95 (electrophile) is an active-site residue. Glu-167 acts as the Proton acceptor in catalysis. Residues Gly-173, Ser-213, and 234 to 235 contribute to the substrate site; that span reads GG.

It belongs to the triosephosphate isomerase family. In terms of assembly, homodimer.

It is found in the cytoplasm. It carries out the reaction D-glyceraldehyde 3-phosphate = dihydroxyacetone phosphate. Its pathway is carbohydrate biosynthesis; gluconeogenesis. It functions in the pathway carbohydrate degradation; glycolysis; D-glyceraldehyde 3-phosphate from glycerone phosphate: step 1/1. Functionally, involved in the gluconeogenesis. Catalyzes stereospecifically the conversion of dihydroxyacetone phosphate (DHAP) to D-glyceraldehyde-3-phosphate (G3P). The sequence is that of Triosephosphate isomerase from Acetivibrio thermocellus (strain ATCC 27405 / DSM 1237 / JCM 9322 / NBRC 103400 / NCIMB 10682 / NRRL B-4536 / VPI 7372) (Clostridium thermocellum).